The sequence spans 165 residues: UPF0763 protein NIS_0363 (165 aa).

It belongs to the UPF0763 family.

In Nitratiruptor sp. (strain SB155-2), this protein is UPF0763 protein NIS_0363.